We begin with the raw amino-acid sequence, 966 residues long: RNA polymerase-associated protein RapA (966 aa).

Positions 163–337 constitute a Helicase ATP-binding domain; it reads EVGQRLHPRV…FARLKLLDAD (175 aa). Residue 176 to 183 participates in ATP binding; the sequence is DEVGLGKT. A DEAH box motif is present at residues 283-286; sequence DEAH. One can recognise a Helicase C-terminal domain in the interval 488–642; that stretch reads RVEWLITFLK…ICPMGMALFE (155 aa).

This sequence belongs to the SNF2/RAD54 helicase family. RapA subfamily. Interacts with the RNAP. Has a higher affinity for the core RNAP than for the holoenzyme. Its ATPase activity is stimulated by binding to RNAP.

Transcription regulator that activates transcription by stimulating RNA polymerase (RNAP) recycling in case of stress conditions such as supercoiled DNA or high salt concentrations. Probably acts by releasing the RNAP, when it is trapped or immobilized on tightly supercoiled DNA. Does not activate transcription on linear DNA. Probably not involved in DNA repair. The polypeptide is RNA polymerase-associated protein RapA (Actinobacillus succinogenes (strain ATCC 55618 / DSM 22257 / CCUG 43843 / 130Z)).